The following is a 330-amino-acid chain: Solute carrier family 25 member 16 (330 aa).

Solcar repeat units lie at residues 32–118 (FYWL…YKTL), 126–214 (SGHV…LKSV), and 236–326 (LKTH…MKQF). 6 consecutive transmembrane segments (helical) span residues 33 to 52 (YWLR…KTTV), 95 to 112 (GAMM…FMAF), 132 to 149 (LMAG…TYPL), 189 to 209 (GLMP…FTFG), 242 to 262 (LLCG…FDVT), and 297 to 317 (GLYR…AVAF).

It belongs to the mitochondrial carrier (TC 2.A.29) family. As to expression, mostly in thyroid, liver, lung, kidney and to a lesser extent in heart and skeletal muscle.

The protein localises to the mitochondrion inner membrane. Its function is as follows. May be involved in the transport of coenzyme A in the mitochondrial matrix. Very little is known about the physiological function of this carrier. The polypeptide is Solute carrier family 25 member 16 (SLC25A16) (Bos taurus (Bovine)).